The following is a 283-amino-acid chain: ATP synthase gamma chain (283 aa).

The protein belongs to the ATPase gamma chain family. In terms of assembly, F-type ATPases have 2 components, CF(1) - the catalytic core - and CF(0) - the membrane proton channel. CF(1) has five subunits: alpha(3), beta(3), gamma(1), delta(1), epsilon(1). CF(0) has three main subunits: a, b and c.

It localises to the cell membrane. Its function is as follows. Produces ATP from ADP in the presence of a proton gradient across the membrane. The gamma chain is believed to be important in regulating ATPase activity and the flow of protons through the CF(0) complex. The polypeptide is ATP synthase gamma chain (Clostridium kluyveri (strain NBRC 12016)).